The primary structure comprises 318 residues: Homoserine kinase (318 aa).

Residue 97-107 (PIGSGLGSSAC) participates in ATP binding.

It belongs to the GHMP kinase family. Homoserine kinase subfamily.

It localises to the cytoplasm. The catalysed reaction is L-homoserine + ATP = O-phospho-L-homoserine + ADP + H(+). It participates in amino-acid biosynthesis; L-threonine biosynthesis; L-threonine from L-aspartate: step 4/5. Its function is as follows. Catalyzes the ATP-dependent phosphorylation of L-homoserine to L-homoserine phosphate. This is Homoserine kinase from Vibrio vulnificus (strain CMCP6).